Reading from the N-terminus, the 779-residue chain is Vezatin (779 aa).

The next 2 membrane-spanning stretches (helical) occupy residues 139-159 (LATP…LLVM) and 162-182 (TWWI…YLVI). Residues 430–462 (VRSLQLHLKALLNEVIILEDELEKLVCTKETQE) adopt a coiled-coil conformation. Disordered stretches follow at residues 618–719 (PVDP…DSLQ) and 757–779 (EQTF…IEEK). A compositionally biased stretch (polar residues) spans 625-634 (ISNSEPSMNS). Basic and acidic residues predominate over residues 638-649 (KVSKNDTEEESN). Polar residues predominate over residues 706 to 719 (GLTTAPPTPRDSLQ). Residues 770–779 (EENKNEIEEK) are compositionally biased toward basic and acidic residues.

Belongs to the vezatin family. As to quaternary structure, interacts with USH2A (via the cytoplasmic region); the interaction associates VEZT with the USH2 complex at the stereocilia base. Interacts with myosin MYO7A and the cadherin-catenins complex.

It is found in the cell membrane. It localises to the cell projection. The protein localises to the stereocilium membrane. Its subcellular location is the cell junction. The protein resides in the adherens junction. It is found in the nucleus. It localises to the cytoplasmic vesicle. The protein localises to the secretory vesicle. Its subcellular location is the acrosome. Functionally, plays a pivotal role in the establishment of adherens junctions and their maintenance in adult life. Required for morphogenesis of the preimplantation embryo, and for the implantation process. (Microbial infection) In case of Listeria infection, promotes bacterial internalization by participating in myosin VIIa recruitment to the entry site. This Homo sapiens (Human) protein is Vezatin (VEZT).